A 286-amino-acid chain; its full sequence is Probable syntaxin-7B (286 aa).

The Cytoplasmic portion of the chain corresponds to 1 to 257 (MTDRQPLISK…YVYKSSYRKK (257 aa)). Residues 97-107 (LSTSNKKESSH) are compositionally biased toward basic and acidic residues. The segment at 97–160 (LSTSNKKESS…TNNNNNNNNN (64 aa)) is disordered. Over residues 114-160 (QQQQQQQNNGNSNNNGYNTRGGYNQQQQQQQQQYNDYTNNNNNNNNN) the composition is skewed to low complexity. The 63-residue stretch at 185–247 (NRILDERNAN…EDAVVELEKA (63 aa)) folds into the t-SNARE coiled-coil homology domain. A helical; Anchor for type IV membrane protein membrane pass occupies residues 258-278 (MIIFVICLLVTLVAVGIFLAI). Topologically, residues 279-286 (YYGVIKKK) are vesicular.

Belongs to the syntaxin family.

It localises to the membrane. In Dictyostelium discoideum (Social amoeba), this protein is Probable syntaxin-7B (syn7B).